The following is a 210-amino-acid chain: ATP-dependent dethiobiotin synthetase BioD (210 aa).

Position 13–18 (13–18) interacts with ATP; sequence DVGKTV. Thr17 contributes to the Mg(2+) binding site. Lys33 is an active-site residue. Mg(2+)-binding residues include Arg47 and Glu101. Residues 101–104 and 185–187 each bind ATP; these read EGAG and PPL.

It belongs to the dethiobiotin synthetase family. In terms of assembly, homodimer. Mg(2+) is required as a cofactor.

The protein resides in the cytoplasm. The catalysed reaction is (7R,8S)-7,8-diammoniononanoate + CO2 + ATP = (4R,5S)-dethiobiotin + ADP + phosphate + 3 H(+). It participates in cofactor biosynthesis; biotin biosynthesis; biotin from 7,8-diaminononanoate: step 1/2. Catalyzes a mechanistically unusual reaction, the ATP-dependent insertion of CO2 between the N7 and N8 nitrogen atoms of 7,8-diaminopelargonic acid (DAPA, also called 7,8-diammoniononanoate) to form a ureido ring. This is ATP-dependent dethiobiotin synthetase BioD from Afipia carboxidovorans (strain ATCC 49405 / DSM 1227 / KCTC 32145 / OM5) (Oligotropha carboxidovorans).